A 487-amino-acid polypeptide reads, in one-letter code: Transmembrane protein 161B (487 aa).

Residue N34 is glycosylated (N-linked (GlcNAc...) asparagine). A helical membrane pass occupies residues 107–127 (LVDFTVAATIVYLVTEVYYSF). N135 is a glycosylation site (N-linked (GlcNAc...) asparagine). The next 2 helical transmembrane spans lie at 136–156 (ISLVWCLLVLSFAIKVLFSLT) and 169–189 (SVCVTFGFFFFVKAMAVLIVT). An N-linked (GlcNAc...) asparagine glycan is attached at N203. The next 5 membrane-spanning stretches (helical) occupy residues 228–248 (FKFFLAVFCSLIGAFLTFPGL), 265–285 (ITQTLLHINFLAPLFMVLLWV), 305–325 (LMTEATFDTLRLWLIILLCVL), 367–387 (VFYYLCVIALQYVAPLVMLLH), and 459–479 (LSFLTWWIAACLFSTSLFGLF).

The protein belongs to the TMEM161 family.

It is found in the cell membrane. Functionally, essential for maintaining normal cardiac rhythm in the developing heart and for neonatal survival. Inhibits potassium and calcium currents in the cardiomyocytes, this assists in timely action potential repolarization and thereby maintains normal cardiac rhythm. In Mus musculus (Mouse), this protein is Transmembrane protein 161B (Tmem161b).